A 509-amino-acid polypeptide reads, in one-letter code: Light-independent protochlorophyllide reductase subunit B (509 aa).

Aspartate 36 lines the [4Fe-4S] cluster pocket. Aspartate 295 serves as the catalytic Proton donor. 430–431 (GM) is a binding site for substrate.

The protein belongs to the ChlB/BchB/BchZ family. As to quaternary structure, protochlorophyllide reductase is composed of three subunits; ChlL, ChlN and ChlB. Forms a heterotetramer of two ChlB and two ChlN subunits. [4Fe-4S] cluster serves as cofactor.

It is found in the plastid. It localises to the chloroplast. It carries out the reaction chlorophyllide a + oxidized 2[4Fe-4S]-[ferredoxin] + 2 ADP + 2 phosphate = protochlorophyllide a + reduced 2[4Fe-4S]-[ferredoxin] + 2 ATP + 2 H2O. It functions in the pathway porphyrin-containing compound metabolism; chlorophyll biosynthesis (light-independent). Functionally, component of the dark-operative protochlorophyllide reductase (DPOR) that uses Mg-ATP and reduced ferredoxin to reduce ring D of protochlorophyllide (Pchlide) to form chlorophyllide a (Chlide). This reaction is light-independent. The NB-protein (ChlN-ChlB) is the catalytic component of the complex. This chain is Light-independent protochlorophyllide reductase subunit B, found in Mesostigma viride (Green alga).